The sequence spans 877 residues: GTPase activating protein homolog 2 (877 aa).

The region spanning 14-285 (FKFTDNLWDG…SVEMIDITND (272 aa)) is the F-BAR domain. A coiled-coil region spans residues 130–214 (QEGIKLKQDM…SNCDEEYREQ (85 aa)). The region spanning 374 to 560 (VSLDELMNRQ…TLIKQIPPPL (187 aa)) is the Rho-GAP domain. Disordered stretches follow at residues 589–612 (DQLS…GSGS), 644–704 (LPPL…AEPT), and 749–800 (AATP…LAST). Composition is skewed to low complexity over residues 593–612 (NDDN…GSGS), 653–676 (SGSG…SPTT), and 749–779 (AATP…STST). Polar residues predominate over residues 780-800 (IKTSSPDRTTPLTSSPPLAST).

The protein resides in the cytoplasm. It is found in the contractile vacuole. Functionally, rho GTPase-activating protein involved in the signal transduction pathway. Regulator of the contractile vacuole network as well as involved in driving vacuole emptying. The chain is GTPase activating protein homolog 2 (mgp2) from Dictyostelium discoideum (Social amoeba).